The primary structure comprises 358 residues: tRNA N6-adenosine threonylcarbamoyltransferase (358 aa).

Fe cation is bound by residues histidine 118 and histidine 122. Residues 143–147 (IVSGG), aspartate 176, glycine 189, and asparagine 298 contribute to the substrate site. A Fe cation-binding site is contributed by aspartate 326.

It belongs to the KAE1 / TsaD family. The cofactor is Fe(2+).

The protein localises to the cytoplasm. The catalysed reaction is L-threonylcarbamoyladenylate + adenosine(37) in tRNA = N(6)-L-threonylcarbamoyladenosine(37) in tRNA + AMP + H(+). Its function is as follows. Required for the formation of a threonylcarbamoyl group on adenosine at position 37 (t(6)A37) in tRNAs that read codons beginning with adenine. Is involved in the transfer of the threonylcarbamoyl moiety of threonylcarbamoyl-AMP (TC-AMP) to the N6 group of A37, together with TsaE and TsaB. TsaD likely plays a direct catalytic role in this reaction. In Rhodopirellula baltica (strain DSM 10527 / NCIMB 13988 / SH1), this protein is tRNA N6-adenosine threonylcarbamoyltransferase.